Reading from the N-terminus, the 147-residue chain is Hemoglobin larval subunit beta-1 (147 aa).

Residues 3–147 enclose the Globin domain; it reads HLSADEKSAI…LVAALSHGYF (145 aa). H64 and H93 together coordinate heme b.

It belongs to the globin family. As to quaternary structure, heterotetramer of two alpha chains and two beta chains. In terms of tissue distribution, red blood cells.

In terms of biological role, this is a larval (tadpole) beta-globin. The sequence is that of Hemoglobin larval subunit beta-1 from Xenopus laevis (African clawed frog).